We begin with the raw amino-acid sequence, 343 residues long: Thromboxane A2 receptor (343 aa).

Topologically, residues M1 to W29 are extracellular. N4 and N16 each carry an N-linked (GlcNAc...) asparagine glycan. The chain crosses the membrane as a helical span at residues F30–A52. The Cytoplasmic segment spans residues R53–F66. A helical transmembrane segment spans residues L67 to S87. Over Q88–R106 the chain is Extracellular. C105 and C183 are oxidised to a cystine. The helical transmembrane segment at F107–S128 threads the bilayer. Residues E129–A149 lie on the Cytoplasmic side of the membrane. The helical transmembrane segment at W150–G172 threads the bilayer. The Extracellular segment spans residues R173–D193. A helical membrane pass occupies residues V194–V219. Topologically, residues A220–Q246 are cytoplasmic. The helical transmembrane segment at L247–L270 threads the bilayer. Residues R271–E289 are Extracellular-facing. Residues L290–F311 form a helical membrane-spanning segment. The Cytoplasmic portion of the chain corresponds to R312–Q343. Phosphoserine is present on residues S329 and S331.

Belongs to the G-protein coupled receptor 1 family. In terms of assembly, interacts with RPGRIP1L. Interacts with RACK1; the interaction regulates TBXA2R cell surface expression.

The protein localises to the cell membrane. Functionally, receptor for thromboxane A2 (TXA2), a potent stimulator of platelet aggregation. The activity of this receptor is mediated by a G-protein that activates a phosphatidylinositol-calcium second messenger system. In the kidney, the binding of TXA2 to glomerular TP receptors causes intense vasoconstriction. Activates phospholipase C and adenylyl cyclase. The chain is Thromboxane A2 receptor (TBXA2R) from Chlorocebus aethiops (Green monkey).